Reading from the N-terminus, the 329-residue chain is NADH-quinone oxidoreductase subunit H 1 (329 aa).

Transmembrane regions (helical) follow at residues 12–32 (LAKI…LVFA), 78–98 (WLFY…FAVI), 120–140 (VGLL…ALGG), 159–179 (LISY…LAGS), 191–211 (GIWF…SIAA), 242–262 (LFFV…TTFF), 270–290 (WLPP…FFIW), and 308–328 (WKVL…ILML).

It belongs to the complex I subunit 1 family. In terms of assembly, NDH-1 is composed of 14 different subunits. Subunits NuoA, H, J, K, L, M, N constitute the membrane sector of the complex.

The protein resides in the cell inner membrane. It carries out the reaction a quinone + NADH + 5 H(+)(in) = a quinol + NAD(+) + 4 H(+)(out). In terms of biological role, NDH-1 shuttles electrons from NADH, via FMN and iron-sulfur (Fe-S) centers, to quinones in the respiratory chain. The immediate electron acceptor for the enzyme in this species is believed to be ubiquinone. Couples the redox reaction to proton translocation (for every two electrons transferred, four hydrogen ions are translocated across the cytoplasmic membrane), and thus conserves the redox energy in a proton gradient. This subunit may bind ubiquinone. The protein is NADH-quinone oxidoreductase subunit H 1 of Geobacter metallireducens (strain ATCC 53774 / DSM 7210 / GS-15).